Consider the following 269-residue polypeptide: Putative hydro-lyase Aave_3512 (269 aa).

The protein belongs to the D-glutamate cyclase family.

The chain is Putative hydro-lyase Aave_3512 from Paracidovorax citrulli (strain AAC00-1) (Acidovorax citrulli).